We begin with the raw amino-acid sequence, 400 residues long: Phosphoglycerate kinase (400 aa).

Substrate contacts are provided by residues 23-25 (DLN), arginine 38, 61-64 (HFGR), arginine 120, and arginine 153. ATP is bound by residues lysine 203, glutamate 325, and 355–358 (GGDT).

The protein belongs to the phosphoglycerate kinase family. In terms of assembly, monomer.

The protein localises to the cytoplasm. The enzyme catalyses (2R)-3-phosphoglycerate + ATP = (2R)-3-phospho-glyceroyl phosphate + ADP. The protein operates within carbohydrate degradation; glycolysis; pyruvate from D-glyceraldehyde 3-phosphate: step 2/5. The polypeptide is Phosphoglycerate kinase (Methylorubrum extorquens (strain PA1) (Methylobacterium extorquens)).